The sequence spans 461 residues: GTPase Der (461 aa).

2 EngA-type G domains span residues 25 to 188 (PVVA…PNVA) and 198 to 371 (RRVA…ASWD). GTP-binding positions include 31 to 38 (GRPNVGKS), 78 to 82 (DTGGW), 140 to 143 (NKVD), 204 to 211 (GKPNVGKS), 251 to 255 (DTAGL), and 316 to 319 (NKWD). Residues 372–454 (TRIATGPLNI…PIRINVRVRE (83 aa)) form the KH-like domain.

Belongs to the TRAFAC class TrmE-Era-EngA-EngB-Septin-like GTPase superfamily. EngA (Der) GTPase family. Associates with the 50S ribosomal subunit.

Its function is as follows. GTPase that plays an essential role in the late steps of ribosome biogenesis. This Mycobacterium leprae (strain TN) protein is GTPase Der.